Consider the following 129-residue polypeptide: Serum amyloid A-1 protein (129 aa).

A signal peptide spans 1–18; it reads MKLFTGLIFCSLVLGVSS. Residues 19–44 form an important for amyloid formation region; it reads QWYSFIGEAAQGAWDMYRAYSDMIEA. The tract at residues 92 to 129 is disordered; that stretch reads GDSGHGVEDSKADQAANEWGRSGKDPNHFRPPGLPDKY.

Belongs to the SAA family. As to quaternary structure, homohexamer; dimer of trimers. Can form amyloid fibrils after partial proteolysis; the native, undenatured protein does not form amyloid fibrils (in vitro). Apolipoprotein of the HDL complex. Binds to heparin. As to expression, detected in liver.

Its subcellular location is the secreted. Functionally, major acute phase protein. In Neovison vison (American mink), this protein is Serum amyloid A-1 protein (SAA1).